A 229-amino-acid chain; its full sequence is 2-C-methyl-D-erythritol 4-phosphate cytidylyltransferase (229 aa).

This sequence belongs to the IspD/TarI cytidylyltransferase family. IspD subfamily.

It catalyses the reaction 2-C-methyl-D-erythritol 4-phosphate + CTP + H(+) = 4-CDP-2-C-methyl-D-erythritol + diphosphate. Its pathway is isoprenoid biosynthesis; isopentenyl diphosphate biosynthesis via DXP pathway; isopentenyl diphosphate from 1-deoxy-D-xylulose 5-phosphate: step 2/6. Catalyzes the formation of 4-diphosphocytidyl-2-C-methyl-D-erythritol from CTP and 2-C-methyl-D-erythritol 4-phosphate (MEP). This Bacillus pumilus (strain SAFR-032) protein is 2-C-methyl-D-erythritol 4-phosphate cytidylyltransferase.